The following is a 1067-amino-acid chain: Zinc finger MIZ domain-containing protein 1 (1067 aa).

The segment at 1 to 120 (MNSMDRHIQQ…HQKSRQSDPP (120 aa)) is sufficient for transactivation activity; sufficient for interaction with NOTCH1. Lysine 91 is covalently cross-linked (Glycyl lysine isopeptide (Lys-Gly) (interchain with G-Cter in SUMO2)). 2 disordered regions span residues 112-141 (QKSR…TLSH) and 327-542 (NSQF…PFPP). Over residues 128–141 (PLSSMSSMKPTLSH) the composition is skewed to low complexity. Positions 413–429 (YGNQQYGPNSQFPTQPG) are enriched in polar residues. Residues 431–440 (YPAPNPPRPL) are compositionally biased toward pro residues. Positions 479–497 (NNTFSGSSYSNYSQGNVNR) are enriched in low complexity. A compositionally biased stretch (pro residues) spans 510-521 (SPVPGNPTPPMT). The segment at 727 to 808 (GEDGVEQTAI…MWGILNAIQH (82 aa)) adopts an SP-RING-type zinc-finger fold. 4 residues coordinate Zn(2+): cysteine 758, histidine 760, cysteine 781, and cysteine 784. Glycyl lysine isopeptide (Lys-Gly) (interchain with G-Cter in SUMO2) cross-links involve residues lysine 834 and lysine 843. A transactivation domain region spans residues 837–1067 (PDGIPSKRFK…DDLLSLFENN (231 aa)). Residues 868–879 (GPSPYPLPPPPG) are compositionally biased toward pro residues. The segment at 868–1067 (GPSPYPLPPP…DDLLSLFENN (200 aa)) is disordered. Polar residues-rich tracts occupy residues 881–895 (TNSN…NYQG) and 951–961 (SSDQPHPSIQQ). A compositionally biased stretch (pro residues) spans 981–996 (APPPPPSQPPRQPPQA). Residues 1040–1067 (PDELLSYLDPPDLPSNSNDDLLSLFENN) are compositionally biased toward low complexity.

In terms of assembly, interacts with AR, but not with ESR1, NR3C1, PGR, THRB nor VDR. Interacts with NOTCH1 and RBPJ. Interacts with SMARCA4. Interacts (via SP-RING-type domain) with SMAD3 and SMAD4 (via MH2 domain). In terms of tissue distribution, expressed most abundantly in ovary and, at lower levels, in prostate, spleen and testis. Weak expression, if any, in thymus, small intestine, colon and peripheral blood leukocytes.

Its subcellular location is the nucleus. It is found in the nucleoplasm. The protein localises to the cytoplasm. In terms of biological role, acts as a transcriptional coactivator. Increases ligand-dependent transcriptional activity of AR and promotes AR sumoylation. The stimulation of AR activity is dependent upon sumoylation. Also functions as a transcriptional coactivator in the TGF-beta signaling pathway by increasing the activity of the SMAD3/SMAD4 transcriptional complex. Involved in transcriptional activation of a subset of NOTCH1 target genes including MYC. Involved in thymocyte and T cell development. Involved in the regulation of postmitotic positioning of pyramidal neurons in the developing cerebral cortex. The protein is Zinc finger MIZ domain-containing protein 1 of Homo sapiens (Human).